The primary structure comprises 197 residues: Large ribosomal subunit protein bL9c (197 aa).

The N-terminal 42 residues, 1–42 (MASSTALSLSWSSSPCWSHSFNGGANETLKVSERRFNFEVVS), are a transit peptide targeting the chloroplast.

The protein belongs to the bacterial ribosomal protein bL9 family. In terms of assembly, part of the 50S ribosomal subunit.

It localises to the plastid. It is found in the chloroplast. Binds to the 23S rRNA. The protein is Large ribosomal subunit protein bL9c (RPL9) of Arabidopsis thaliana (Mouse-ear cress).